We begin with the raw amino-acid sequence, 189 residues long: Ribosome maturation factor RimM (189 aa).

A PRC barrel domain is found at 113–189; the sequence is DGEYYWVDLL…TIVADWQPDY (77 aa).

It belongs to the RimM family. As to quaternary structure, binds ribosomal protein uS19.

The protein localises to the cytoplasm. Its function is as follows. An accessory protein needed during the final step in the assembly of 30S ribosomal subunit, possibly for assembly of the head region. Essential for efficient processing of 16S rRNA. May be needed both before and after RbfA during the maturation of 16S rRNA. It has affinity for free ribosomal 30S subunits but not for 70S ribosomes. This Delftia acidovorans (strain DSM 14801 / SPH-1) protein is Ribosome maturation factor RimM.